A 686-amino-acid polypeptide reads, in one-letter code: DNA ligase (686 aa).

NAD(+) contacts are provided by residues 34–38, 83–84, and E120; these read DAEYD and SI. K122 serves as the catalytic N6-AMP-lysine intermediate. R143, E180, K298, and K322 together coordinate NAD(+). The Zn(2+) site is built by C420, C423, C438, and C444. The 84-residue stretch at 603–686 folds into the BRCT domain; it reads QSGGILSGKT…ALLGSNKKNG (84 aa).

It belongs to the NAD-dependent DNA ligase family. LigA subfamily. Mg(2+) is required as a cofactor. Mn(2+) serves as cofactor.

The enzyme catalyses NAD(+) + (deoxyribonucleotide)n-3'-hydroxyl + 5'-phospho-(deoxyribonucleotide)m = (deoxyribonucleotide)n+m + AMP + beta-nicotinamide D-nucleotide.. In terms of biological role, DNA ligase that catalyzes the formation of phosphodiester linkages between 5'-phosphoryl and 3'-hydroxyl groups in double-stranded DNA using NAD as a coenzyme and as the energy source for the reaction. It is essential for DNA replication and repair of damaged DNA. This chain is DNA ligase, found in Thiobacillus denitrificans (strain ATCC 25259 / T1).